The chain runs to 142 residues: Large ribosomal subunit protein uL29 (142 aa).

Belongs to the universal ribosomal protein uL29 family.

This is Large ribosomal subunit protein uL29 (RPL35) from Theileria annulata.